The chain runs to 281 residues: MSHGTYYECEPRGGQQPLEFSGGRAGPGELGDMCEHEASIDLSAYIESGEEQLLSDLFAVKPAPEARGLKGPGTPAFPHYLPPDPRPFAYPPHTFGPDRKALGPGIYSSPGSYDPRAVAVKEEPRGPEGSRAASRGSYNPLQYQVAHCGQTAMHLPPTLAAPGQPLRVLKAPLATAAPPCSPLLKAPSPAGPLHKGKKAVNKDSLEYRLRRERNNIAVRKSRDKAKRRILETQQKVLEYMAENERLRSRVEQLTQELDTLRNLFRQIPEAANLIKGVGGCS.

Positions 1–30 are disordered; sequence MSHGTYYECEPRGGQQPLEFSGGRAGPGEL. Lys-121 participates in a covalent cross-link: Glycyl lysine isopeptide (Lys-Gly) (interchain with G-Cter in SUMO2). Residue Ser-181 is modified to Phosphoserine. The 64-residue stretch at 204 to 267 folds into the bZIP domain; sequence SLEYRLRRER…DTLRNLFRQI (64 aa). The basic motif stretch occupies residues 208–228; sequence RLRRERNNIAVRKSRDKAKRR. The tract at residues 230 to 237 is leucine-zipper; sequence LETQQKVL.

This sequence belongs to the bZIP family. C/EBP subfamily. As to quaternary structure, binds DNA as a homodimer and as a heterodimer. Can form stable heterodimers with CEBPA, CEBPB and CEBPD. Interacts with GATA1 and SPI1. Interacts with SMARCD2. Phosphorylated. Strongest expression occurs in promyelocyte and late-myeloblast-like cell lines.

It is found in the nucleus. Transcriptional activator. C/EBP are DNA-binding proteins that recognize two different motifs: the CCAAT homology common to many promoters and the enhanced core homology common to many enhancers. Required for the promyelocyte-myelocyte transition in myeloid differentiation. In Homo sapiens (Human), this protein is CCAAT/enhancer-binding protein epsilon (CEBPE).